Consider the following 670-residue polypeptide: DNA ligase (670 aa).

NAD(+) contacts are provided by residues 35–39 (DSVYD), 84–85 (SL), and Glu116. Lys118 acts as the N6-AMP-lysine intermediate in catalysis. Positions 139, 176, 293, and 317 each coordinate NAD(+). Zn(2+)-binding residues include Cys411, Cys414, Cys429, and Cys435. One can recognise a BRCT domain in the interval 592 to 670 (VVKSEIAGKT…EEAFLKLLKS (79 aa)).

The protein belongs to the NAD-dependent DNA ligase family. LigA subfamily. Mg(2+) serves as cofactor. Mn(2+) is required as a cofactor.

It carries out the reaction NAD(+) + (deoxyribonucleotide)n-3'-hydroxyl + 5'-phospho-(deoxyribonucleotide)m = (deoxyribonucleotide)n+m + AMP + beta-nicotinamide D-nucleotide.. DNA ligase that catalyzes the formation of phosphodiester linkages between 5'-phosphoryl and 3'-hydroxyl groups in double-stranded DNA using NAD as a coenzyme and as the energy source for the reaction. It is essential for DNA replication and repair of damaged DNA. The chain is DNA ligase from Coxiella burnetii (strain RSA 331 / Henzerling II).